Here is a 393-residue protein sequence, read N- to C-terminus: Biotin synthase, mitochondrial (393 aa).

Residues 1 to 20 (MSVSFTRSFPRAFIRSYGTV) constitute a mitochondrion transit peptide. A Radical SAM core domain is found at 81–310 (SAIQMCTLMN…ATIVRLAAGR (230 aa)). 3 residues coordinate [4Fe-4S] cluster: cysteine 96, cysteine 100, and cysteine 103. [2Fe-2S] cluster contacts are provided by cysteine 140, cysteine 173, cysteine 233, and arginine 305. The disordered stretch occupies residues 366-393 (NAATPQQHVDSVAHESEKNPAAPAAEAL).

This sequence belongs to the radical SAM superfamily. Biotin synthase family. It depends on [4Fe-4S] cluster as a cofactor. The cofactor is [2Fe-2S] cluster.

The protein resides in the mitochondrion. The catalysed reaction is (4R,5S)-dethiobiotin + (sulfur carrier)-SH + 2 reduced [2Fe-2S]-[ferredoxin] + 2 S-adenosyl-L-methionine = (sulfur carrier)-H + biotin + 2 5'-deoxyadenosine + 2 L-methionine + 2 oxidized [2Fe-2S]-[ferredoxin]. It participates in cofactor biosynthesis; biotin biosynthesis; biotin from 7,8-diaminononanoate: step 2/2. Biotin synthase; part of the cluster involved in the biosynthesis of biotin (also known as vitamin B8 or vitamin H), a water-soluble vitamin that functions as a prosthetic group of many carboxylases, such as acetyl-CoA carboxylase and pyruvate carboxylase. Catalyzes the conversion of dethiobiotin (DTB) to biotin by the insertion of a sulfur atom into dethiobiotin via a radical-based mechanism. This chain is Biotin synthase, mitochondrial, found in Emericella nidulans (strain FGSC A4 / ATCC 38163 / CBS 112.46 / NRRL 194 / M139) (Aspergillus nidulans).